Here is a 264-residue protein sequence, read N- to C-terminus: LIMR family protein SELMODRAFT_416716 (264 aa).

4 consecutive transmembrane segments (helical) span residues valine 23–tyrosine 43, isoleucine 96–alanine 116, isoleucine 194–leucine 214, and tryptophan 225–isoleucine 245.

The protein belongs to the LIMR family.

Its subcellular location is the membrane. In Selaginella moellendorffii (Spikemoss), this protein is LIMR family protein SELMODRAFT_416716.